The following is a 306-amino-acid chain: UDP-3-O-acyl-N-acetylglucosamine deacetylase (306 aa).

Residues His79, His238, and Asp242 each coordinate Zn(2+). The active-site Proton donor is the His265.

It belongs to the LpxC family. The cofactor is Zn(2+).

The enzyme catalyses a UDP-3-O-[(3R)-3-hydroxyacyl]-N-acetyl-alpha-D-glucosamine + H2O = a UDP-3-O-[(3R)-3-hydroxyacyl]-alpha-D-glucosamine + acetate. It functions in the pathway glycolipid biosynthesis; lipid IV(A) biosynthesis; lipid IV(A) from (3R)-3-hydroxytetradecanoyl-[acyl-carrier-protein] and UDP-N-acetyl-alpha-D-glucosamine: step 2/6. Catalyzes the hydrolysis of UDP-3-O-myristoyl-N-acetylglucosamine to form UDP-3-O-myristoylglucosamine and acetate, the committed step in lipid A biosynthesis. This Shewanella piezotolerans (strain WP3 / JCM 13877) protein is UDP-3-O-acyl-N-acetylglucosamine deacetylase.